The following is a 374-amino-acid chain: Type II methyltransferase M.NgoFVII (374 aa).

Positions 16-344 (PKILSLFSGC…KSILPIFSDN (329 aa)) constitute an SAM-dependent MTase C5-type domain. Residue C88 is part of the active site.

This sequence belongs to the class I-like SAM-binding methyltransferase superfamily. C5-methyltransferase family.

The enzyme catalyses a 2'-deoxycytidine in DNA + S-adenosyl-L-methionine = a 5-methyl-2'-deoxycytidine in DNA + S-adenosyl-L-homocysteine + H(+). Its function is as follows. A methylase, recognizes the double-stranded sequence 5'-GCSGC-3', methylates C-5 on both strands, and protects the DNA from cleavage by the NgoFVII endonuclease. In Neisseria gonorrhoeae, this protein is Type II methyltransferase M.NgoFVII (ngoFVIIM).